Here is a 127-residue protein sequence, read N- to C-terminus: MORF4 family-associated protein 1 (127 aa).

Residues 76–97 (ESALNHLQNPDDGAEGRGTKRC) are disordered. Residues 92 to 126 (RGTKRCEKAEEKAKEIAKMAEMLVELVRRIEKSES) are a coiled coil.

The protein belongs to the MORF4 family-associated protein family. Found in a complex composed of MORF4L1, MRFAP1 and RB1. Interacts via its N-terminus with MORF4L1. Interacts with CSTB and MORF4L2.

Its subcellular location is the nucleus. The protein localises to the cytoplasm. The protein resides in the perinuclear region. The protein is MORF4 family-associated protein 1 of Bos taurus (Bovine).